Reading from the N-terminus, the 821-residue chain is Bifunctional dethiobiotin synthetase/7,8-diamino-pelargonic acid aminotransferase, mitochondrial (821 aa).

A dethiobiotin synthetase region spans residues serine 28–aspartate 283. Glycine 39 to leucine 44 contributes to the ATP binding site. Threonine 43 lines the Mg(2+) pocket. Position 72 (threonine 72) interacts with substrate. Mg(2+) is bound at residue glutamate 194. Glutamate 194–glycine 197 serves as a coordination point for ATP. The interval arginine 316 to leucine 820 is 7,8-diamino-pelargonic acid aminotransferase. Residue tryptophan 374–tryptophan 375 coordinates (8S)-8-amino-7-oxononanoate. Residue glycine 436–serine 437 participates in pyridoxal 5'-phosphate binding. Tyrosine 482 is a binding site for (8S)-8-amino-7-oxononanoate. A pyridoxal 5'-phosphate-binding site is contributed by aspartate 626. (8S)-8-amino-7-oxononanoate-binding residues include lysine 655 and glycine 689. The residue at position 655 (lysine 655) is an N6-(pyridoxal phosphate)lysine. Residue serine 691 participates in pyridoxal 5'-phosphate binding. A (8S)-8-amino-7-oxononanoate-binding site is contributed by arginine 787.

The protein in the N-terminal section; belongs to the dethiobiotin synthetase family. In the C-terminal section; belongs to the class-III pyridoxal-phosphate-dependent aminotransferase family. BioA subfamily. It depends on Mg(2+) as a cofactor. The cofactor is pyridoxal 5'-phosphate.

The protein resides in the mitochondrion. The enzyme catalyses (7R,8S)-7,8-diammoniononanoate + CO2 + ATP = (4R,5S)-dethiobiotin + ADP + phosphate + 3 H(+). The catalysed reaction is (8S)-8-amino-7-oxononanoate + S-adenosyl-L-methionine = S-adenosyl-4-methylsulfanyl-2-oxobutanoate + (7R,8S)-7,8-diammoniononanoate. The protein operates within cofactor biosynthesis; biotin biosynthesis; biotin from 7,8-diaminononanoate: step 1/2. Its pathway is cofactor biosynthesis; biotin biosynthesis; 7,8-diaminononanoate from 8-amino-7-oxononanoate (SAM route): step 1/1. In terms of biological role, bifunctional enzyme that catalyzes two different reactions involved in the biotin biosynthesis. Functionally, catalyzes a mechanistically unusual reaction, the ATP-dependent insertion of CO2 between the N7 and N8 nitrogen atoms of 7,8-diaminopelargonic acid (DAPA) to form an ureido ring. Catalyzes the transfer of the alpha-amino group from S-adenosyl-L-methionine (SAM) to 7-keto-8-aminopelargonic acid (KAPA) to form 7,8-diaminopelargonic acid (DAPA). It is the only aminotransferase known to utilize SAM as an amino donor. The sequence is that of Bifunctional dethiobiotin synthetase/7,8-diamino-pelargonic acid aminotransferase, mitochondrial (BIO3-BIO1) from Oryza sativa subsp. japonica (Rice).